A 437-amino-acid chain; its full sequence is Ribosomal protein uS12 methylthiotransferase RimO (437 aa).

Residues 4-114 (PRVSFVSLGC…VMNAVHEVAP (111 aa)) form the MTTase N-terminal domain. [4Fe-4S] cluster-binding residues include Cys-13, Cys-49, Cys-78, Cys-145, Cys-149, and Cys-152. A Radical SAM core domain is found at 131-369 (LTPRHYAYLK…MAKQQQISTN (239 aa)). Residues 372–437 (KKKVGKRLPV…DAYDLHGTAV (66 aa)) form the TRAM domain.

Belongs to the methylthiotransferase family. RimO subfamily. Requires [4Fe-4S] cluster as cofactor.

The protein localises to the cytoplasm. The enzyme catalyses L-aspartate(89)-[ribosomal protein uS12]-hydrogen + (sulfur carrier)-SH + AH2 + 2 S-adenosyl-L-methionine = 3-methylsulfanyl-L-aspartate(89)-[ribosomal protein uS12]-hydrogen + (sulfur carrier)-H + 5'-deoxyadenosine + L-methionine + A + S-adenosyl-L-homocysteine + 2 H(+). Its function is as follows. Catalyzes the methylthiolation of an aspartic acid residue of ribosomal protein uS12. This Brucella abortus (strain S19) protein is Ribosomal protein uS12 methylthiotransferase RimO.